We begin with the raw amino-acid sequence, 612 residues long: Kelch repeat and BTB domain-containing protein 3 (612 aa).

Residues Tyr52–Asp119 form the BTB domain. The 101-residue stretch at Cys154–Cys254 folds into the BACK domain. Kelch repeat units lie at residues Lys295–Gly341, Lys343–Asp403, Arg404–Asn454, Ile456–Pro506, and Lys552–Phe599.

This Homo sapiens (Human) protein is Kelch repeat and BTB domain-containing protein 3.